The following is a 182-amino-acid chain: NADH-quinone oxidoreductase subunit B 2 (182 aa).

[4Fe-4S] cluster is bound by residues Cys-57, Cys-58, Cys-123, and Cys-153.

It belongs to the complex I 20 kDa subunit family. In terms of assembly, NDH-1 is composed of 14 different subunits. Subunits NuoB, C, D, E, F, and G constitute the peripheral sector of the complex. [4Fe-4S] cluster serves as cofactor.

It is found in the cell membrane. It carries out the reaction a quinone + NADH + 5 H(+)(in) = a quinol + NAD(+) + 4 H(+)(out). Its function is as follows. NDH-1 shuttles electrons from NADH, via FMN and iron-sulfur (Fe-S) centers, to quinones in the respiratory chain. The immediate electron acceptor for the enzyme in this species is believed to be a menaquinone. Couples the redox reaction to proton translocation (for every two electrons transferred, four hydrogen ions are translocated across the cytoplasmic membrane), and thus conserves the redox energy in a proton gradient. This Symbiobacterium thermophilum (strain DSM 24528 / JCM 14929 / IAM 14863 / T) protein is NADH-quinone oxidoreductase subunit B 2.